The following is a 131-amino-acid chain: Small ribosomal subunit protein eS8 (131 aa).

Residues 1 to 38 (MKLGAYYKGGDLKKPSGGKKRKVRRTKKKALGGGPPQI) are disordered. Positions 16–30 (SGGKKRKVRRTKKKA) are enriched in basic residues.

This sequence belongs to the eukaryotic ribosomal protein eS8 family. Part of the 30S ribosomal subunit.

The sequence is that of Small ribosomal subunit protein eS8 from Pyrobaculum arsenaticum (strain DSM 13514 / JCM 11321 / PZ6).